A 110-amino-acid chain; its full sequence is MLKQKIKTIFEALLYIMLTYWLIDSFFAFNKYDWMLESGGNICSIPSVSGEDRILQAMIAAFFLLTPLIILILRKLFMREMFEFWVYVFSLGICLVCGWWLFWGRFIFCY.

Residues 1–8 (MLKQKIKT) lie on the Cytoplasmic side of the membrane. The chain crosses the membrane as a helical span at residues 9–29 (IFEALLYIMLTYWLIDSFFAF). The Periplasmic portion of the chain corresponds to 30 to 53 (NKYDWMLESGGNICSIPSVSGEDR). Residues 54 to 74 (ILQAMIAAFFLLTPLIILILR) form a helical membrane-spanning segment. At 75–83 (KLFMREMFE) the chain is on the cytoplasmic side. The helical transmembrane segment at 84–104 (FWVYVFSLGICLVCGWWLFWG) threads the bilayer. Topologically, residues 105-110 (RFIFCY) are periplasmic.

It is found in the cell inner membrane. In Escherichia coli (strain K12), this protein is Inner membrane protein YgiZ (ygiZ).